Reading from the N-terminus, the 123-residue chain is Large ribosomal subunit protein bL12 (123 aa).

This sequence belongs to the bacterial ribosomal protein bL12 family. In terms of assembly, homodimer. Part of the ribosomal stalk of the 50S ribosomal subunit. Forms a multimeric L10(L12)X complex, where L10 forms an elongated spine to which 2 to 4 L12 dimers bind in a sequential fashion. Binds GTP-bound translation factors.

Forms part of the ribosomal stalk which helps the ribosome interact with GTP-bound translation factors. Is thus essential for accurate translation. The sequence is that of Large ribosomal subunit protein bL12 from Roseobacter denitrificans (strain ATCC 33942 / OCh 114) (Erythrobacter sp. (strain OCh 114)).